A 640-amino-acid polypeptide reads, in one-letter code: Translation factor GUF1, mitochondrial (640 aa).

The N-terminal 26 residues, 1–26 (MRRLRSLYLQSSICFRRFNHYSAKDT), are a transit peptide targeting the mitochondrion. Positions 39-223 (ENYRNFSIVA…AIIDRIPPPT (185 aa)) constitute a tr-type G domain. Residues 48–55 (AHVDHGKS), 115–119 (DTPGH), and 169–172 (NKID) each bind GTP.

Belongs to the TRAFAC class translation factor GTPase superfamily. Classic translation factor GTPase family. LepA subfamily.

It is found in the mitochondrion inner membrane. The enzyme catalyses GTP + H2O = GDP + phosphate + H(+). Its function is as follows. Promotes mitochondrial protein synthesis. May act as a fidelity factor of the translation reaction, by catalyzing a one-codon backward translocation of tRNAs on improperly translocated ribosomes. Binds to mitochondrial ribosomes in a GTP-dependent manner. In Lachancea thermotolerans (strain ATCC 56472 / CBS 6340 / NRRL Y-8284) (Yeast), this protein is Translation factor GUF1, mitochondrial.